Here is a 487-residue protein sequence, read N- to C-terminus: Protein nucleotidyltransferase YdiU (487 aa).

Positions 90, 92, 93, 113, 125, 126, 176, and 183 each coordinate ATP. The active-site Proton acceptor is Asp-252. Residues Asn-253 and Asp-262 each contribute to the Mg(2+) site. Residue Asp-262 coordinates ATP.

The protein belongs to the SELO family. Mg(2+) is required as a cofactor. Requires Mn(2+) as cofactor.

The catalysed reaction is L-seryl-[protein] + ATP = 3-O-(5'-adenylyl)-L-seryl-[protein] + diphosphate. The enzyme catalyses L-threonyl-[protein] + ATP = 3-O-(5'-adenylyl)-L-threonyl-[protein] + diphosphate. It carries out the reaction L-tyrosyl-[protein] + ATP = O-(5'-adenylyl)-L-tyrosyl-[protein] + diphosphate. It catalyses the reaction L-histidyl-[protein] + UTP = N(tele)-(5'-uridylyl)-L-histidyl-[protein] + diphosphate. The catalysed reaction is L-seryl-[protein] + UTP = O-(5'-uridylyl)-L-seryl-[protein] + diphosphate. The enzyme catalyses L-tyrosyl-[protein] + UTP = O-(5'-uridylyl)-L-tyrosyl-[protein] + diphosphate. Nucleotidyltransferase involved in the post-translational modification of proteins. It can catalyze the addition of adenosine monophosphate (AMP) or uridine monophosphate (UMP) to a protein, resulting in modifications known as AMPylation and UMPylation. This is Protein nucleotidyltransferase YdiU from Pseudomonas savastanoi pv. phaseolicola (strain 1448A / Race 6) (Pseudomonas syringae pv. phaseolicola (strain 1448A / Race 6)).